A 426-amino-acid chain; its full sequence is Histidine--tRNA ligase (426 aa).

Belongs to the class-II aminoacyl-tRNA synthetase family.

The protein resides in the cytoplasm. The catalysed reaction is tRNA(His) + L-histidine + ATP = L-histidyl-tRNA(His) + AMP + diphosphate + H(+). The polypeptide is Histidine--tRNA ligase (Saccharolobus shibatae (strain ATCC 51178 / DSM 5389 / JCM 8931 / NBRC 15437 / B12) (Sulfolobus shibatae)).